We begin with the raw amino-acid sequence, 98 residues long: MTKSELIERIVTHQGLLSSKDVELAIKTMLEQMSQCLATGDRIEIRGFGSFSLHYRAPRVGRNPKTGQSVSLEGKFVPHFKPGKELRDRVNEEDEAEA.

It belongs to the bacterial histone-like protein family. Heterodimer of an alpha and a beta chain.

Functionally, this protein is one of the two subunits of integration host factor, a specific DNA-binding protein that functions in genetic recombination as well as in transcriptional and translational control. The polypeptide is Integration host factor subunit beta (Pseudomonas putida (strain GB-1)).